The primary structure comprises 427 residues: Pseudouridylate synthase 1 homolog (427 aa).

The interval 20 to 83 (GPRPSCSPRM…DEERREKPPK (64 aa)) is disordered. Residues 44–79 (QDRRSCSGRAGGDRVWEDGEHPAKKLKSGGDEERRE) are compositionally biased toward basic and acidic residues. Residue Asp-146 is the Nucleophile of the active site. Residues 407–427 (GGTGAKVPSPLEGSEGDGDTD) form a disordered region. A phosphoserine mark is found at Ser-415 and Ser-420. Thr-426 carries the post-translational modification Phosphothreonine.

It belongs to the tRNA pseudouridine synthase TruA family. Monomer. Forms a complex with RARG and the SRA1 RNA in the nucleus. Widely expressed. High levels of expression found in brain and skeletal muscle.

It localises to the mitochondrion. Its subcellular location is the nucleus. The protein resides in the cytoplasm. The enzyme catalyses a uridine in tRNA = a pseudouridine in tRNA. It carries out the reaction uridine(38/39/40) in tRNA = pseudouridine(38/39/40) in tRNA. It catalyses the reaction a uridine in mRNA = a pseudouridine in mRNA. Pseudouridylate synthase that catalyzes pseudouridylation of tRNAs and mRNAs. Acts on positions 27/28 in the anticodon stem and also positions 34 and 36 in the anticodon of an intron containing tRNA. Also catalyzes pseudouridylation of mRNAs: mediates pseudouridylation of mRNAs with the consensus sequence 5'-UGUAG-3'. Acts as a regulator of pre-mRNA splicing by mediating pseudouridylation of pre-mRNAs at locations associated with alternatively spliced regions. Pseudouridylation of pre-mRNAs near splice sites directly regulates mRNA splicing and mRNA 3'-end processing. Involved in regulation of nuclear receptor activity through pseudouridylation of SRA1 mRNA. The protein is Pseudouridylate synthase 1 homolog of Homo sapiens (Human).